The primary structure comprises 535 residues: Arylsulfatase K (535 aa).

Positions 1 to 22 (MLLLWLSVFAASALAAPDRGAG) are cleaved as a signal peptide. Positions 44 and 84 each coordinate Ca(2+). Residue cysteine 84 is the Nucleophile of the active site. Position 84 is a 3-oxoalanine (Cys) (cysteine 84). A glycan (N-linked (GlcNAc...) asparagine) is linked at asparagine 112. Residue lysine 132 coordinates substrate. Residue asparagine 197 is glycosylated (N-linked (GlcNAc...) asparagine). Histidine 255 is a binding site for substrate. Asparagine 266 carries an N-linked (GlcNAc...) asparagine glycan. Aspartate 317 and histidine 318 together coordinate Ca(2+). Residues asparagine 379, asparagine 417, and asparagine 502 are each glycosylated (N-linked (GlcNAc...) asparagine).

Belongs to the sulfatase family. It depends on Ca(2+) as a cofactor. Post-translationally, the conversion to 3-oxoalanine (also known as C-formylglycine, FGly), of a serine or cysteine residue in prokaryotes and of a cysteine residue in eukaryotes, is critical for catalytic activity. The 75-kDa precursor undergoes proteolytic processing to yield a 23 kDa form. In terms of processing, N-glycosylated with both high mannose and complex type sugars.

The protein resides in the secreted. Its subcellular location is the lysosome. The enzyme catalyses an aryl sulfate + H2O = a phenol + sulfate + H(+). It catalyses the reaction Hydrolysis of the 2-sulfate groups of the 2-O-sulfo-D-glucuronate residues of chondroitin sulfate, heparin and heparitin sulfate.. Its function is as follows. Catalyzes the hydrolysis of pseudosubstrates such as p-nitrocatechol sulfate and p-nitrophenyl sulfate. Catalyzes the hydrolysis of the 2-sulfate groups of the 2-O-sulfo-D-glucuronate residues of chondroitin sulfate, heparin and heparitin sulfate. Acts selectively on 2-sulfoglucuronate and lacks activity against 2-sulfoiduronate. This is Arylsulfatase K (ARSK) from Canis lupus familiaris (Dog).